The chain runs to 249 residues: 3-deoxy-D-manno-octulosonic acid kinase (249 aa).

Residue D175 is part of the active site.

This sequence belongs to the protein kinase superfamily. KdkA/RfaP family.

Its subcellular location is the cell inner membrane. The enzyme catalyses an alpha-Kdo-(2-&gt;6)-lipid IVA + ATP = a 4-O-phospho-alpha-Kdo-(2-&gt;6)-lipid IVA + ADP + H(+). The protein operates within bacterial outer membrane biogenesis; LPS core biosynthesis. Its function is as follows. Catalyzes the ATP-dependent phosphorylation of the 3-deoxy-D-manno-octulosonic acid (Kdo) residue in Kdo-lipid IV(A) at the 4-OH position. This Xylella fastidiosa (strain M23) protein is 3-deoxy-D-manno-octulosonic acid kinase.